The chain runs to 872 residues: DNA mismatch repair protein MutS (872 aa).

Position 622–629 (622–629) interacts with ATP; the sequence is GPNMAGKS.

The protein belongs to the DNA mismatch repair MutS family.

Its function is as follows. This protein is involved in the repair of mismatches in DNA. It is possible that it carries out the mismatch recognition step. This protein has a weak ATPase activity. This Geotalea uraniireducens (strain Rf4) (Geobacter uraniireducens) protein is DNA mismatch repair protein MutS.